We begin with the raw amino-acid sequence, 123 residues long: Large ribosomal subunit protein uL18 (123 aa).

It belongs to the universal ribosomal protein uL18 family. Part of the 50S ribosomal subunit; part of the 5S rRNA/L5/L18/L25 subcomplex. Contacts the 5S and 23S rRNAs.

In terms of biological role, this is one of the proteins that bind and probably mediate the attachment of the 5S RNA into the large ribosomal subunit, where it forms part of the central protuberance. This is Large ribosomal subunit protein uL18 from Protochlamydia amoebophila (strain UWE25).